Reading from the N-terminus, the 339-residue chain is MSKNAYAQSGVDVEAGYEVVERIKKHVARTERAGVMGGLGGFGGMFDLSKTGVKEPVLISGTDGVGTKLMLAIKYDKHDTIGQDCVAMCVNDIIAAGAEPLYFLDYVATGKNEPAKLEQVIAGVAEGCVQSGVALIGGETAEMPGMYGEDDYDLAGFAVGVAEKSQIIDGSKVAEGDVLLGLASSGIHSNGYSLVRRVFADYTGEEVLPELEGQKLKDVLLEPTRIYVKAALPLIKEELVNGIAHITGGGFIENVPRMFSDDLAAEIDESKVPVLPIFKALEKYGEIKHEEMFEIFNMGIGLMFAVKPENVERVKELLDEPVYEIGRIVKKDGASVVIK.

It belongs to the AIR synthase family.

It is found in the cytoplasm. It carries out the reaction 2-formamido-N(1)-(5-O-phospho-beta-D-ribosyl)acetamidine + ATP = 5-amino-1-(5-phospho-beta-D-ribosyl)imidazole + ADP + phosphate + H(+). It functions in the pathway purine metabolism; IMP biosynthesis via de novo pathway; 5-amino-1-(5-phospho-D-ribosyl)imidazole from N(2)-formyl-N(1)-(5-phospho-D-ribosyl)glycinamide: step 2/2. The chain is Phosphoribosylformylglycinamidine cyclo-ligase from Streptococcus thermophilus (strain ATCC BAA-250 / LMG 18311).